We begin with the raw amino-acid sequence, 1943 residues long: Cadherin-86C (1943 aa).

The interval methionine 1–proline 102 is disordered. The Extracellular segment spans residues methionine 1–lysine 934. Residue asparagine 12 is glycosylated (N-linked (GlcNAc...) asparagine). A compositionally biased stretch (basic residues) spans proline 50–glutamine 89. Low complexity predominate over residues histidine 90–histidine 100. Cadherin domains follow at residues cysteine 238–phenylalanine 366, threonine 367–phenylalanine 483, glutamate 484–phenylalanine 600, glutamate 601–phenylalanine 708, and aspartate 709–phenylalanine 832. Residues asparagine 244, asparagine 419, asparagine 531, asparagine 579, asparagine 585, asparagine 612, and asparagine 645 are each glycosylated (N-linked (GlcNAc...) asparagine). N-linked (GlcNAc...) asparagine glycosylation occurs at asparagine 912. Residues valine 935–leucine 955 form a helical membrane-spanning segment. Residues leucine 956 to serine 1943 are Cytoplasmic-facing. 5 disordered regions span residues aspartate 1038–glutamate 1058, lysine 1390–isoleucine 1442, glutamate 1458–arginine 1516, tyrosine 1546–valine 1695, and lysine 1707–aspartate 1895. The span at glutamate 1047–glutamate 1058 shows a compositional bias: basic and acidic residues. Positions isoleucine 1426 to isoleucine 1442 are enriched in basic residues. 2 stretches are compositionally biased toward basic and acidic residues: residues glutamine 1486–arginine 1497 and histidine 1507–arginine 1516. The span at aspartate 1552–glutamate 1568 shows a compositional bias: acidic residues. Residues glutamine 1580 to lysine 1602 show a composition bias toward basic and acidic residues. Over residues lysine 1633–isoleucine 1667 the composition is skewed to polar residues. The segment covering serine 1709–serine 1724 has biased composition (low complexity). Composition is skewed to basic and acidic residues over residues threonine 1754 to proline 1764, leucine 1774 to threonine 1793, histidine 1800 to alanine 1810, and lysine 1837 to valine 1863. The span at histidine 1879 to threonine 1889 shows a compositional bias: polar residues.

In terms of tissue distribution, as cell intercalation proceeds, a row of stigmatophore cells surrounding the spiracular chamber show expression of Cad86C. Expression is regulated by the Abd-B cascade, requiring sal. Expressed in a broad region of the morphogenetic furrow and in clusters of cells posterior to the morphogenetic furrow. Weakly expressed in the epithelium of wing imaginal disks. In eye imaginal disk cells within the morphogenetic furrow, expression is localized to the apical region.

The protein localises to the cell membrane. In terms of biological role, cadherins are calcium-dependent cell adhesion proteins. They preferentially interact with themselves in a homophilic manner in connecting cells. This chain is Cadherin-86C (Cad86C), found in Drosophila melanogaster (Fruit fly).